We begin with the raw amino-acid sequence, 225 residues long: MERSKQSHDNQADSRPTTNESSLNGHFDGLVKKTPGMWDVKGRGTAGESSSHTGSSVVENWKHERTRSIEDNEMSLPSLAAAYTTIIRGLGKDPQRQGLLKTPWRAATAMQFFTKGYQEKIIDVLNDAILDEDHDEMVIVKDIDMFSMCEHHLVPIFGRVHIGYLPNKRVLGLSKLARIVEIYSRRLQVQERLTKQIAVAITEALQPAGVGVVIEATHMCMVMRG.

Residues 1-12 (MERSKQSHDNQA) are compositionally biased toward basic and acidic residues. The interval 1–59 (MERSKQSHDNQADSRPTTNESSLNGHFDGLVKKTPGMWDVKGRGTAGESSSHTGSSVVE) is disordered. Polar residues-rich tracts occupy residues 13 to 24 (DSRPTTNESSLN) and 47 to 58 (GESSSHTGSSVV). Residues cysteine 149, histidine 152, and cysteine 220 each contribute to the Zn(2+) site.

The protein belongs to the GTP cyclohydrolase I family. In terms of assembly, toroid-shaped homodecamer, composed of two pentamers of five dimers.

The protein resides in the cytoplasm. It is found in the nucleus. It catalyses the reaction GTP + H2O = 7,8-dihydroneopterin 3'-triphosphate + formate + H(+). Its pathway is cofactor biosynthesis; 7,8-dihydroneopterin triphosphate biosynthesis; 7,8-dihydroneopterin triphosphate from GTP: step 1/1. GTP shows a positive allosteric effect, and tetrahydrobiopterin inhibits the enzyme activity. Zinc is required for catalytic activity. Inhibited by Mg(2+). Its function is as follows. May positively regulate nitric oxide synthesis in endothelial cells. May be involved in dopamine synthesis. May modify pain sensitivity and persistence. The protein is GTP cyclohydrolase 1 (gch1) of Oncorhynchus mykiss (Rainbow trout).